Reading from the N-terminus, the 447-residue chain is Mannose/glucose-specific lectin (447 aa).

Jacalin-type lectin domains follow at residues 5-148, 153-294, and 300-443; these read MISV…FVKP, TISF…YVKP, and SISI…FVKP.

The protein belongs to the jacalin lectin family. As to expression, expressed in seeds (at protein level).

Its activity is regulated as follows. Hemagglutinating activity is slightly inhibited by alpha-methyl-D-mannopyranoside. Its function is as follows. D-mannose/D-glucose-binding lectin that also binds derivatives N-acetyl-D-glucosamine and alpha-methyl-D-mannopyranoside. Does not bind D-galactose, L-Rhamnose, D-fructose, lactose or glycoproteins fetiun and mucin. Shows agglutinating activity towards human and rabbit erythrocytes. Also displays antimicrobial activity against L.infantum. This chain is Mannose/glucose-specific lectin, found in Parkia pendula (Inga pendula).